A 331-amino-acid polypeptide reads, in one-letter code: Serpentine receptor class alpha-9 (331 aa).

7 helical membrane-spanning segments follow: residues 26–46 (IDLL…QLVL), 58–78 (LILE…IEAI), 104–124 (YLKV…GLMI), 142–162 (IIGF…GKLF), 189–209 (YFTV…LLKI), 238–258 (VCFL…GVGA), and 275–295 (LCVV…LLLI).

The protein belongs to the nematode receptor-like protein sra family.

Its subcellular location is the membrane. The protein is Serpentine receptor class alpha-9 (sra-9) of Caenorhabditis elegans.